Here is a 907-residue protein sequence, read N- to C-terminus: Cytochrome b561, DM13 and DOMON domain-containing protein At5g54830 (907 aa).

Positions methionine 1–glycine 24 are cleaved as a signal peptide. The DM13 domain maps to serine 31–serine 139. The tract at residues serine 144–alanine 172 is disordered. Polar residues predominate over residues proline 153 to glutamate 168. 2 DOMON domains span residues aspartate 184–glycine 329 and glutamine 524–glycine 645. The region spanning leucine 653 to tyrosine 850 is the Cytochrome b561 domain. Residues valine 685–isoleucine 705 traverse the membrane as a helical segment. Residues histidine 689 and histidine 723 each coordinate heme b. 4 helical membrane-spanning segments follow: residues glycine 730–phenylalanine 750, histidine 754–leucine 774, serine 795–methionine 815, and glycine 829–glutamate 849. Heme b contacts are provided by histidine 754 and histidine 796. A compositionally biased stretch (basic and acidic residues) spans glycine 884–glycine 897. Residues glycine 884–lysine 907 form a disordered region.

The cofactor is heme b.

It localises to the membrane. May act as a catecholamine-responsive trans-membrane electron transporter. The sequence is that of Cytochrome b561, DM13 and DOMON domain-containing protein At5g54830 from Arabidopsis thaliana (Mouse-ear cress).